Reading from the N-terminus, the 402-residue chain is AA9 family lytic polysaccharide monooxygenase E (402 aa).

An N-terminal signal peptide occupies residues 1 to 16 (MSRLVSFASLLAAVNA). Cu(2+) is bound at residue H17. Disulfide bonds link C72–C194 and C113–C117. N75 carries N-linked (GlcNAc...) asparagine glycosylation. Cu(2+) is bound at residue H102. N154 carries an N-linked (GlcNAc...) asparagine glycan. H180 and Q189 together coordinate O2. Position 191 (Y191) interacts with Cu(2+). Residues 364 to 400 (GSNPLYAQCGGLNFKGASGCVAGATCKKMNPYYSQCV) enclose the CBM1 domain.

Belongs to the polysaccharide monooxygenase AA9 family. Cu(2+) serves as cofactor.

The protein resides in the secreted. The catalysed reaction is [(1-&gt;4)-beta-D-glucosyl]n+m + reduced acceptor + O2 = 4-dehydro-beta-D-glucosyl-[(1-&gt;4)-beta-D-glucosyl]n-1 + [(1-&gt;4)-beta-D-glucosyl]m + acceptor + H2O.. In terms of biological role, lytic polysaccharide monooxygenase (LPMO) that depolymerizes crystalline and amorphous polysaccharides via the oxidation of scissile alpha- or beta-(1-4)-glycosidic bonds, yielding C1 or C4 oxidation products. Catalysis by LPMOs requires the reduction of the active-site copper from Cu(II) to Cu(I) by a reducing agent and H(2)O(2) or O(2) as a cosubstrate. This is AA9 family lytic polysaccharide monooxygenase E from Emericella nidulans (strain FGSC A4 / ATCC 38163 / CBS 112.46 / NRRL 194 / M139) (Aspergillus nidulans).